The sequence spans 569 residues: uncharacterized protein (569 aa).

Positions Met-1–Ala-21 are cleaved as a signal peptide. Topologically, residues Lys-22 to Lys-530 are extracellular. The helical transmembrane segment at Ala-531–Phe-551 threads the bilayer. Topologically, residues Tyr-552–Gly-569 are cytoplasmic.

The protein resides in the cell membrane. This is an uncharacterized protein from Bacillus subtilis (strain 168).